Reading from the N-terminus, the 259-residue chain is Translation initiation factor IF-2, chloroplastic (259 aa).

Positions 171 to 259 constitute a tr-type G domain; that stretch reads LRAPIVAVLG…LLIIAADEGI (89 aa). Residue 180 to 187 participates in GTP binding; that stretch reads GHVNHGKT.

The protein belongs to the TRAFAC class translation factor GTPase superfamily. Classic translation factor GTPase family. IF-2 subfamily.

It localises to the plastid. The protein resides in the chloroplast. One of the essential components for the initiation of protein synthesis. Protects formylmethionyl-tRNA from spontaneous hydrolysis and promotes its binding to the 30S ribosomal subunits. Also involved in the hydrolysis of GTP during the formation of the 70S ribosomal complex. This Galdieria sulphuraria (Red alga) protein is Translation initiation factor IF-2, chloroplastic (infB).